The primary structure comprises 548 residues: Chaperonin GroEL (548 aa).

Residues Thr-30–Pro-33, Lys-51, Asp-87–Thr-91, Gly-415, Asn-479–Ala-481, and Asp-495 contribute to the ATP site.

This sequence belongs to the chaperonin (HSP60) family. In terms of assembly, forms a cylinder of 14 subunits composed of two heptameric rings stacked back-to-back. Interacts with the co-chaperonin GroES.

The protein resides in the cytoplasm. The enzyme catalyses ATP + H2O + a folded polypeptide = ADP + phosphate + an unfolded polypeptide.. Functionally, together with its co-chaperonin GroES, plays an essential role in assisting protein folding. The GroEL-GroES system forms a nano-cage that allows encapsulation of the non-native substrate proteins and provides a physical environment optimized to promote and accelerate protein folding. This chain is Chaperonin GroEL, found in Ectopseudomonas mendocina (strain ymp) (Pseudomonas mendocina).